The following is a 302-amino-acid chain: tRNA dimethylallyltransferase (302 aa).

21–28 is a binding site for ATP; the sequence is GPTASGKS. Residue 23 to 28 participates in substrate binding; the sequence is TASGKS.

The protein belongs to the IPP transferase family. Monomer. Mg(2+) serves as cofactor.

The catalysed reaction is adenosine(37) in tRNA + dimethylallyl diphosphate = N(6)-dimethylallyladenosine(37) in tRNA + diphosphate. Functionally, catalyzes the transfer of a dimethylallyl group onto the adenine at position 37 in tRNAs that read codons beginning with uridine, leading to the formation of N6-(dimethylallyl)adenosine (i(6)A). The protein is tRNA dimethylallyltransferase of Paracoccus denitrificans (strain Pd 1222).